A 571-amino-acid polypeptide reads, in one-letter code: Hemagglutinin-neuraminidase (571 aa).

Residues 1-25 lie on the Intravirion side of the membrane; sequence MEDYSNLSLKSIPKRTCRIIFRTAT. A helical transmembrane segment spans residues 26–46; sequence ILGICTLIVLCSSILHEIIHL. Residues 47 to 571 are Virion surface-facing; sequence DVSSGLMDSD…IIPFLRELIP (525 aa). Disulfide bonds link C166–C190, C180–C241, and C232–C245. Positions 228–233 are important for neuraminidase activity; sequence NRKSCS. An involved in neuraminidase activity region spans residues 228-233; the sequence is NRKSCS. N-linked (GlcNAc...) asparagine; by host glycosylation is found at N272, N284, N335, and N341. 3 cysteine pairs are disulfide-bonded: C338–C459, C370–C380, and C453–C463. Residue N386 is glycosylated (N-linked (GlcNAc...) asparagine; by host). Positions 393 to 398 are sialic receptor-binding site; that stretch reads GAEGRL. Residues N454, N498, N501, N517, and N522 are each glycosylated (N-linked (GlcNAc...) asparagine; by host). C535 and C546 form a disulfide bridge.

It belongs to the paramyxoviruses hemagglutinin-neuraminidase family. As to quaternary structure, homotetramer; composed of disulfide-linked homodimers. Interacts with F protein trimer.

It is found in the virion membrane. It localises to the host cell membrane. It carries out the reaction Hydrolysis of alpha-(2-&gt;3)-, alpha-(2-&gt;6)-, alpha-(2-&gt;8)- glycosidic linkages of terminal sialic acid residues in oligosaccharides, glycoproteins, glycolipids, colominic acid and synthetic substrates.. Its function is as follows. Attaches the virus to sialic acid-containing cell receptors and thereby initiating infection. Binding of HN protein to the receptor induces a conformational change that allows the F protein to trigger virion/cell membranes fusion. Neuraminidase activity ensures the efficient spread of the virus by dissociating the mature virions from the neuraminic acid containing glycoproteins. This chain is Hemagglutinin-neuraminidase (HN), found in Human parainfluenza 2 virus (strain Toshiba) (HPIV-2).